Reading from the N-terminus, the 115-residue chain is Cyclin-dependent protein kinase inhibitor SMR3 (115 aa).

The span at 17–36 (KIRLPTRPELDIPDSDHEDP) shows a compositional bias: basic and acidic residues. The disordered stretch occupies residues 17–82 (KIRLPTRPEL…RSSGTKRKLT (66 aa)). A compositionally biased stretch (basic residues) spans 67-81 (RKPKPNRSSGTKRKL).

In terms of assembly, interacts with CDKA-1 and D-type cyclins. Expressed at low levels in roots and stems.

It is found in the nucleus. In terms of biological role, probable cyclin-dependent protein kinase (CDK) inhibitor that functions as a repressor of mitosis in the endoreduplication cell cycle. The protein is Cyclin-dependent protein kinase inhibitor SMR3 of Arabidopsis thaliana (Mouse-ear cress).